Consider the following 489-residue polypeptide: Betaine aldehyde dehydrogenase (489 aa).

Positions 26 and 93 each coordinate K(+). 150-152 (GAW) is a binding site for NAD(+). The Charge relay system role is filled by K162. 176-179 (KPSE) is an NAD(+) binding site. V180 serves as a coordination point for K(+). 229 to 232 (GVET) lines the NAD(+) pocket. L245 provides a ligand contact to K(+). The Proton acceptor role is filled by E251. Residues G253, C285, and E386 each contribute to the NAD(+) site. The active-site Nucleophile is the C285. C285 carries the post-translational modification Cysteine sulfenic acid (-SOH). K456 and G459 together coordinate K(+). E463 (charge relay system) is an active-site residue.

It belongs to the aldehyde dehydrogenase family. As to quaternary structure, dimer of dimers. It depends on K(+) as a cofactor.

It catalyses the reaction betaine aldehyde + NAD(+) + H2O = glycine betaine + NADH + 2 H(+). The protein operates within amine and polyamine biosynthesis; betaine biosynthesis via choline pathway; betaine from betaine aldehyde: step 1/1. Its function is as follows. Involved in the biosynthesis of the osmoprotectant glycine betaine. Catalyzes the irreversible oxidation of betaine aldehyde to the corresponding acid. The sequence is that of Betaine aldehyde dehydrogenase from Burkholderia ambifaria (strain MC40-6).